The primary structure comprises 82 residues: Savignygrin (-) (82 aa).

A signal peptide spans 1-21 (MQANIFVFAFLLLSVAVAAYG). 3 disulfides stabilise this stretch: Cys-26-Cys-79, Cys-34-Cys-59, and Cys-53-Cys-75. The Cell attachment site signature appears at 35 to 37 (RGD).

Expressed in salivary glands.

Its subcellular location is the cytoplasmic vesicle. The protein localises to the secretory vesicle. It localises to the secreted. Tick salivary platelet aggregation inhibitor that plays an important part in the anti-hemostatic strategy of ticks. Inhibits platelet aggregation induced by ADP (IC(50)=130 nM), collagen, the thrombin receptor-activating peptide, and epinephrine, although platelets are activated and their shape changed. Binding to platelets is similar for resting and activated platelets (Kd=50-70 nM). Acts by specifically binding to platelet membrane glycoprotein IIb-IIIa (ITGA2B/ITGB3) in a divalent metal ion dependent manner. In contrast to many disintegrins which only interacts with the beta-3 subunit, this protein interacts with the two subunits (alpha-IIb and beta-3). Also causes disaggregation of aggregated platelets without influencing the activated spherical shape associated with aggregated platelets and causes a decrease in the number of pseudopodia on the activated platelet surface. Does not show any inhibitory activity for the different serine proteases tested. The protein is Savignygrin (-) of Ornithodoros kalahariensis (Tick).